The primary structure comprises 286 residues: Pantothenate synthetase (286 aa).

32–39 (MGALHEGH) provides a ligand contact to ATP. His-39 acts as the Proton donor in catalysis. Gln-63 lines the (R)-pantoate pocket. Residue Gln-63 participates in beta-alanine binding. 149–152 (GEKD) provides a ligand contact to ATP. Gln-155 provides a ligand contact to (R)-pantoate. ATP contacts are provided by residues Leu-178 and 186–189 (SSSR).

Belongs to the pantothenate synthetase family. As to quaternary structure, homodimer.

It localises to the cytoplasm. It carries out the reaction (R)-pantoate + beta-alanine + ATP = (R)-pantothenate + AMP + diphosphate + H(+). The protein operates within cofactor biosynthesis; (R)-pantothenate biosynthesis; (R)-pantothenate from (R)-pantoate and beta-alanine: step 1/1. Its function is as follows. Catalyzes the condensation of pantoate with beta-alanine in an ATP-dependent reaction via a pantoyl-adenylate intermediate. The chain is Pantothenate synthetase from Bartonella quintana (strain Toulouse) (Rochalimaea quintana).